The primary structure comprises 364 residues: DNA replication and repair protein RecF (364 aa).

30–37 serves as a coordination point for ATP; the sequence is GNNAQGKT.

This sequence belongs to the RecF family.

The protein resides in the cytoplasm. In terms of biological role, the RecF protein is involved in DNA metabolism; it is required for DNA replication and normal SOS inducibility. RecF binds preferentially to single-stranded, linear DNA. It also seems to bind ATP. The chain is DNA replication and repair protein RecF from Clostridium botulinum (strain Okra / Type B1).